A 270-amino-acid polypeptide reads, in one-letter code: Phosphonoacetaldehyde hydrolase (270 aa).

The active-site Nucleophile is the D11. Residues D11 and A13 each contribute to the Mg(2+) site. K53 functions as the Schiff-base intermediate with substrate in the catalytic mechanism. D187 serves as a coordination point for Mg(2+).

The protein belongs to the HAD-like hydrolase superfamily. PhnX family. Homodimer. The cofactor is Mg(2+).

It carries out the reaction phosphonoacetaldehyde + H2O = acetaldehyde + phosphate + H(+). Its function is as follows. Involved in phosphonate degradation. The chain is Phosphonoacetaldehyde hydrolase from Salmonella enteritidis PT4 (strain P125109).